The chain runs to 350 residues: Gene 40 protein (350 aa).

237 to 244 (AVKESGKT) lines the ATP pocket.

The chain is Gene 40 protein (40) from Bacillus phage SP01 (Bacteriophage SP01).